The primary structure comprises 712 residues: Polyribonucleotide nucleotidyltransferase (712 aa).

Positions 493 and 499 each coordinate Mg(2+). The KH domain occupies 560 to 622 (PRLTKLTIDP…RDAEAAIERI (63 aa)). Residues 632 to 700 (GEDYVGTVKG…DDGKMRLTRK (69 aa)) enclose the S1 motif domain.

Belongs to the polyribonucleotide nucleotidyltransferase family. Mg(2+) is required as a cofactor.

The protein localises to the cytoplasm. The enzyme catalyses RNA(n+1) + phosphate = RNA(n) + a ribonucleoside 5'-diphosphate. Functionally, involved in mRNA degradation. Catalyzes the phosphorolysis of single-stranded polyribonucleotides processively in the 3'- to 5'-direction. The chain is Polyribonucleotide nucleotidyltransferase from Salinibacter ruber (strain DSM 13855 / M31).